A 178-amino-acid chain; its full sequence is Large ribosomal subunit protein uL6 (178 aa).

This sequence belongs to the universal ribosomal protein uL6 family. As to quaternary structure, part of the 50S ribosomal subunit. Interacts weakly with protein L13.

This protein binds to the 23S rRNA, and is important in its secondary structure. It is located near the subunit interface in the base of the L7/L12 stalk, and near the tRNA binding site of the peptidyltransferase center. This Haloarcula marismortui (strain ATCC 43049 / DSM 3752 / JCM 8966 / VKM B-1809) (Halobacterium marismortui) protein is Large ribosomal subunit protein uL6.